Reading from the N-terminus, the 511-residue chain is Maturase K (511 aa).

The protein belongs to the intron maturase 2 family. MatK subfamily.

Its subcellular location is the plastid. The protein resides in the chloroplast. Its function is as follows. Usually encoded in the trnK tRNA gene intron. Probably assists in splicing its own and other chloroplast group II introns. In Avena sativa (Oat), this protein is Maturase K.